The primary structure comprises 932 residues: uncharacterized protein (932 aa).

Disordered stretches follow at residues 26 to 120 (NINN…NMLT), 158 to 289 (MGIG…EEKK), 304 to 617 (NNNN…INHD), 635 to 720 (QQSQ…PPLV), and 802 to 863 (SVSS…FPLE). Low complexity-rich tracts occupy residues 41–105 (NNNI…IISS) and 163–241 (NNNN…YGNN). The segment covering 242–253 (TPVNYIHNNSTP) has biased composition (polar residues). Residues 265-285 (SDEEDSVLYSSDDSEESDYEE) show a composition bias toward acidic residues. The segment covering 304 to 475 (NNNNINNNNM…NNNNNNNNNN (172 aa)) has biased composition (low complexity). 2 stretches are compositionally biased toward polar residues: residues 476 to 492 (ENYV…NTES) and 527 to 540 (DIPN…TKQQ). The span at 548-590 (SPVYSPPNNLSPLSSPYLHHNSNNNSNNGGGNSNNNNTNFNYG) shows a compositional bias: low complexity. Residues 606-617 (GERDPPHVINHD) show a composition bias toward basic and acidic residues. 3 stretches are compositionally biased toward low complexity: residues 635–666 (QQSQ…PSSS), 696–707 (SPPNTSISSLSS), and 813–853 (NSSN…NNNS). Residues 854–863 (EPKKPKFPLE) are compositionally biased toward basic and acidic residues.

This is an uncharacterized protein from Dictyostelium discoideum (Social amoeba).